We begin with the raw amino-acid sequence, 431 residues long: Enolase (431 aa).

Position 167 (Gln167) interacts with (2R)-2-phosphoglycerate. Residue Glu209 is the Proton donor of the active site. Residues Asp246, Glu289, and Asp316 each coordinate Mg(2+). Positions 341, 370, 371, and 392 each coordinate (2R)-2-phosphoglycerate. The active-site Proton acceptor is the Lys341.

The protein belongs to the enolase family. As to quaternary structure, component of the RNA degradosome, a multiprotein complex involved in RNA processing and mRNA degradation. It depends on Mg(2+) as a cofactor.

It localises to the cytoplasm. The protein localises to the secreted. It is found in the cell surface. It catalyses the reaction (2R)-2-phosphoglycerate = phosphoenolpyruvate + H2O. It functions in the pathway carbohydrate degradation; glycolysis; pyruvate from D-glyceraldehyde 3-phosphate: step 4/5. In terms of biological role, catalyzes the reversible conversion of 2-phosphoglycerate (2-PG) into phosphoenolpyruvate (PEP). It is essential for the degradation of carbohydrates via glycolysis. This is Enolase from Shewanella sp. (strain MR-4).